The chain runs to 290 residues: Protein CREG2 (290 aa).

The signal sequence occupies residues 1–31 (MSVRRGRRPARPGTRLSWLLCCSALLSPAAG). N-linked (GlcNAc...) asparagine glycans are attached at residues asparagine 165 and asparagine 166.

It belongs to the CREG family. It is not sure whether N-glycosylation is on Asn-165 and/or Asn-166. Brain specific mainly in the limbic system and faintly in the spinal cord but not in cerebellum.

The protein localises to the secreted. The polypeptide is Protein CREG2 (CREG2) (Homo sapiens (Human)).